The sequence spans 197 residues: A-type ATP synthase subunit E 2 (197 aa).

The protein belongs to the V-ATPase E subunit family. Has multiple subunits with at least A(3), B(3), C, D, E, F, H, I and proteolipid K(x).

Its subcellular location is the cell membrane. Component of the A-type ATP synthase that produces ATP from ADP in the presence of a proton gradient across the membrane. In Methanospirillum hungatei JF-1 (strain ATCC 27890 / DSM 864 / NBRC 100397 / JF-1), this protein is A-type ATP synthase subunit E 2.